The chain runs to 1202 residues: Inner capsid protein VP3 (1202 aa).

Disordered stretches follow at residues 1–45 (MRPI…SGKI) and 73–99 (YTSK…PRVT). The segment covering 10–21 (NQERTTTKHQET) has biased composition (basic and acidic residues). Residues 27–45 (NEQTTSDQRFTRSSNSGKI) show a composition bias toward polar residues.

It belongs to the turreted BTV-fold inner capsid family. Homodecamer; each decamer is made up of two conformers of VP2, called VP2A and VP2B. 12 homodecamers assemble to form an icosahedral capsid.

It localises to the virion. Functionally, inner capsid protein that self-assembles to form an icosahedral capsid with a T=2 symmetry, which consists of 120 copies of VP2, with channels at each of its five-fold vertices. This capsid constitutes the innermost concentric layer of the viral mature particle. The protein is Inner capsid protein VP3 (S3) of Aedes pseudoscutellaris reovirus (isolate France) (ApRV).